The chain runs to 533 residues: 2-succinyl-5-enolpyruvyl-6-hydroxy-3-cyclohexene-1-carboxylate synthase (533 aa).

Belongs to the TPP enzyme family. MenD subfamily. Homodimer. Mg(2+) is required as a cofactor. The cofactor is Mn(2+). It depends on thiamine diphosphate as a cofactor.

The catalysed reaction is isochorismate + 2-oxoglutarate + H(+) = 5-enolpyruvoyl-6-hydroxy-2-succinyl-cyclohex-3-ene-1-carboxylate + CO2. It participates in quinol/quinone metabolism; 1,4-dihydroxy-2-naphthoate biosynthesis; 1,4-dihydroxy-2-naphthoate from chorismate: step 2/7. The protein operates within quinol/quinone metabolism; menaquinone biosynthesis. Functionally, catalyzes the thiamine diphosphate-dependent decarboxylation of 2-oxoglutarate and the subsequent addition of the resulting succinic semialdehyde-thiamine pyrophosphate anion to isochorismate to yield 2-succinyl-5-enolpyruvyl-6-hydroxy-3-cyclohexene-1-carboxylate (SEPHCHC). In Akkermansia muciniphila (strain ATCC BAA-835 / DSM 22959 / JCM 33894 / BCRC 81048 / CCUG 64013 / CIP 107961 / Muc), this protein is 2-succinyl-5-enolpyruvyl-6-hydroxy-3-cyclohexene-1-carboxylate synthase.